Here is a 468-residue protein sequence, read N- to C-terminus: Glutamate--tRNA ligase 2 (468 aa).

The 'HIGH' region motif lies at 11–21; the sequence is PSPTGFLHIGG. The short motif at 239-243 is the 'KMSKS' region element; it reads KLSKR. Lys-242 is a binding site for ATP.

It belongs to the class-I aminoacyl-tRNA synthetase family. Glutamate--tRNA ligase type 1 subfamily. As to quaternary structure, monomer.

It is found in the cytoplasm. The catalysed reaction is tRNA(Glu) + L-glutamate + ATP = L-glutamyl-tRNA(Glu) + AMP + diphosphate. Functionally, catalyzes the attachment of glutamate to tRNA(Glu) in a two-step reaction: glutamate is first activated by ATP to form Glu-AMP and then transferred to the acceptor end of tRNA(Glu). In Ruegeria pomeroyi (strain ATCC 700808 / DSM 15171 / DSS-3) (Silicibacter pomeroyi), this protein is Glutamate--tRNA ligase 2.